The chain runs to 127 residues: Histone H2B.2 (127 aa).

Residues 1 to 35 (MAPKAEKKPASKAPAAKKTTASTDASKKRTKTRKE) form a disordered region. An N6-acetyllysine; alternate mark is found at K7 and K8. Glycyl lysine isopeptide (Lys-Gly) (interchain with G-Cter in SUMO); alternate cross-links involve residues K7 and K8. At S11 the chain carries Phosphoserine. The span at 11-24 (SKAPAAKKTTASTD) shows a compositional bias: low complexity. N6-acetyllysine is present on K12. K120 is covalently cross-linked (Glycyl lysine isopeptide (Lys-Gly) (interchain with G-Cter in ubiquitin)).

This sequence belongs to the histone H2B family. The nucleosome is a histone octamer containing two molecules each of H2A, H2B, H3 and H4 assembled in one H3-H4 heterotetramer and two H2A-H2B heterodimers. The octamer wraps approximately 147 bp of DNA. Post-translationally, monoubiquitinated by the UBC2-BRE1 complex to form H2BK123ub1. H2BK123ub1 gives a specific tag for epigenetic transcriptional activation and is also prerequisite for H3K4me and H3K79me formation. H2BK123ub1 also modulates the formation of double-strand breaks during meiosis and is a prerequisite for DNA-damage checkpoint activation. Phosphorylated by STE20 to form H2BS10ph during progression through meiotic prophase. May be correlated with chromosome condensation. In terms of processing, acetylation of N-terminal lysines and particularly formation of H2BK11ac has a positive effect on transcription. Post-translationally, sumoylation to form H2BK6su or H2BK7su occurs preferentially near the telomeres and represses gene transcription.

Its subcellular location is the nucleus. The protein resides in the chromosome. Core component of nucleosome. Nucleosomes wrap and compact DNA into chromatin, limiting DNA accessibility to the cellular machineries which require DNA as a template. Histones thereby play a central role in transcription regulation, DNA repair, DNA replication and chromosomal stability. DNA accessibility is regulated via a complex set of post-translational modifications of histones, also called histone code, and nucleosome remodeling. The sequence is that of Histone H2B.2 (HTB2) from Eremothecium gossypii (strain ATCC 10895 / CBS 109.51 / FGSC 9923 / NRRL Y-1056) (Yeast).